Consider the following 1102-residue polypeptide: Protein MMS22-like (1102 aa).

The protein belongs to the MMS22 family. MMS22L subfamily.

The protein resides in the nucleus. It is found in the chromosome. In terms of biological role, involved in recombination-dependent repair of stalled or collapsed replication forks. The protein is Protein MMS22-like of Drosophila melanogaster (Fruit fly).